The sequence spans 1568 residues: Agglutinin-like protein 7 (1568 aa).

Residues 1 to 18 form the signal peptide; the sequence is MKKLYLLYLLASFTTVIS. Intrachain disulfides connect Cys-74/Cys-151, Cys-97/Cys-113, Cys-206/Cys-299, and Cys-228/Cys-257. 4 ALS repeats span residues 403 to 434, 441 to 471, 476 to 507, and 512 to 543; these read TTLTTYWQESSTATTTYFDDIDLVDTVIVKIP, ITTQFWSGKYLTTETHKEPPLGTDSVIIKEP, VTTTEFWSESFATTETITNNPEGTDSVIIKEP, and VTTTKFWSESFATTETITTGPLGTDSIVIHDP. Disordered regions lie at residues 546-662, 721-743, and 767-832; these read ESSS…SSSS, LSSDTSSYYPSSTISPSDDFPHT, and VSLT…SIPT. Low complexity-rich tracts occupy residues 547–662, 721–738, 768–793, and 801–824; these read SSSS…SSSS, LSSDTSSYYPSSTISPSD, SLTSDPASSFDSSSRLNSDSSSSPST, and SSSFSTLIKSSESRESSSGTILSE. Residue Asn-559 is glycosylated (N-linked (GlcNAc...) asparagine). A glycan (N-linked (GlcNAc...) asparagine) is linked at Asn-851. Disordered stretches follow at residues 860 to 1030 and 1046 to 1097; these read VVSS…VASE and EVVS…ENSD. The segment covering 872–904 has biased composition (low complexity); the sequence is ESSVSVTSESSESVTSESVASESVTSESVTAVS. A compositionally biased stretch (polar residues) spans 909–918; the sequence is LYTTSEEVST. The span at 919–945 shows a compositional bias: low complexity; sequence SDSNSGMSSPIPSSEQRSSIPIMSSSD. The segment covering 956-992 has biased composition (polar residues); the sequence is GTILSEESSDSIPTTFSTRYWSPSGMSSRHYTNSTET. Asn-988 carries N-linked (GlcNAc...) asparagine glycosylation. Composition is skewed to low complexity over residues 993–1002 and 1009–1030; these read SVSDVVSSSV and ESSVSVISESSESVTSESVASE. Over residues 1046–1062 the composition is skewed to polar residues; sequence EVVSTSDSKIVPSTSVP. The span at 1063-1077 shows a compositional bias: low complexity; that stretch reads SSEQRSSIPIMSSSD. An N-linked (GlcNAc...) asparagine glycan is attached at Asn-1188. Disordered regions lie at residues 1194–1220 and 1271–1305; these read LGMSNSDDGLSEDTRSSSVAGKEEIEL and GLSDSDTFPSENSNRSRSFKESTDNTISISRESLG. 2 stretches are compositionally biased toward polar residues: residues 1272–1286 and 1294–1303; these read LSDSDTFPSENSNRS and DNTISISRES. Asn-1284 carries N-linked (GlcNAc...) asparagine glycosylation. Ser-1548 is lipidated: GPI-anchor amidated serine. The propeptide at 1549-1568 is removed in mature form; sequence GSVSKYSLWMMAFYMLFGLF.

It belongs to the ALS family. In terms of processing, the GPI-anchor is attached to the protein in the endoplasmic reticulum and serves to target the protein to the cell surface. There, the glucosamine-inositol phospholipid moiety is cleaved off and the GPI-modified mannoprotein is covalently attached via its lipidless GPI glycan remnant to the 1,6-beta-glucan of the outer cell wall layer.

Its subcellular location is the cell membrane. It localises to the secreted. The protein resides in the cell wall. Its function is as follows. Cell surface adhesion protein which mediates both yeast-to-host tissue adherence and yeast aggregation. Plays an important role in the pathogenesis of C.albicans infections. The polypeptide is Agglutinin-like protein 7 (ALS7) (Candida albicans (strain SC5314 / ATCC MYA-2876) (Yeast)).